Here is a 531-residue protein sequence, read N- to C-terminus: Protein tweety homolog 2-like (531 aa).

Over 1 to 44 (MASSRQDYIAPWWTYWLHNFPHLNFNFQTVDNTFKPEDASYQQS) the chain is Extracellular. The helical transmembrane segment at 45-65 (LVFLACVSAVALGLCLLLLSV) threads the bilayer. Residues 66-87 (YLTCLCCCRREEDEEVKRPDTC) are Cytoplasmic-facing. The chain crosses the membrane as a helical span at residues 88–108 (CVTWAAVITGLVICSAVGVGF). At 109 to 213 (YGNSETNDGV…RTAFIEYYRW (105 aa)) the chain is on the extracellular side. The N-linked (GlcNAc...) asparagine glycan is linked to Asn-129. Residues 214–234 (LTYLLLLILDLVICLLACLAL) form a helical membrane-spanning segment. Residues 235-239 (AKQSR) are Cytoplasmic-facing. The chain crosses the membrane as a helical span at residues 240–260 (WLLTVIMVCGMLTLIMSWASL). The Extracellular segment spans residues 261 to 389 (GAGTATAVGT…GVCYDGVEGL (129 aa)). Residues Asn-283 and Asn-352 are each glycosylated (N-linked (GlcNAc...) asparagine). The chain crosses the membrane as a helical span at residues 390–410 (LYLCLFSLLAACAFCALLCAV). Residues 411 to 531 (PRAWMLIAIR…IRHFGTDFQV (121 aa)) are Cytoplasmic-facing.

Belongs to the tweety family.

It localises to the cell membrane. In terms of biological role, probable large-conductance Ca(2+)-activated chloride channel. In Danio rerio (Zebrafish), this protein is Protein tweety homolog 2-like (ttyh2l).